Here is a 735-residue protein sequence, read N- to C-terminus: Photosystem I P700 chlorophyll a apoprotein A2 (735 aa).

The next 8 membrane-spanning stretches (helical) occupy residues 47 to 70, 136 to 159, 176 to 200, 274 to 292, 331 to 354, 370 to 396, 418 to 440, and 518 to 536; these read IFAS…FHVA, LYVG…LHLQ, LNHH…HVAI, MAHH…GHMY, LHFQ…QHMY, AALY…IFFI, ALIS…LYVH, and FLVH…LILV. Residues Cys560 and Cys569 each coordinate [4Fe-4S] cluster. 2 consecutive transmembrane segments (helical) span residues 576–597 and 644–666; these read AFYL…YWHW and LSVW…MFLI. Residues His655, Met663, and Tyr671 each coordinate chlorophyll a. Trp672 is a phylloquinone binding site. A helical transmembrane segment spans residues 708 to 728; sequence LVGLAHFSVGYIFTYAAFLIA.

The protein belongs to the PsaA/PsaB family. As to quaternary structure, the PsaA/B heterodimer binds the P700 chlorophyll special pair and subsequent electron acceptors. PSI consists of a core antenna complex that captures photons, and an electron transfer chain that converts photonic excitation into a charge separation. The eukaryotic PSI reaction center is composed of at least 11 subunits. Requires P700 is a chlorophyll a/chlorophyll a' dimer, A0 is one or more chlorophyll a, A1 is one or both phylloquinones and FX is a shared 4Fe-4S iron-sulfur center. as cofactor.

The protein localises to the plastid. It localises to the chloroplast thylakoid membrane. It catalyses the reaction reduced [plastocyanin] + hnu + oxidized [2Fe-2S]-[ferredoxin] = oxidized [plastocyanin] + reduced [2Fe-2S]-[ferredoxin]. Functionally, psaA and PsaB bind P700, the primary electron donor of photosystem I (PSI), as well as the electron acceptors A0, A1 and FX. PSI is a plastocyanin/cytochrome c6-ferredoxin oxidoreductase, converting photonic excitation into a charge separation, which transfers an electron from the donor P700 chlorophyll pair to the spectroscopically characterized acceptors A0, A1, FX, FA and FB in turn. Oxidized P700 is reduced on the lumenal side of the thylakoid membrane by plastocyanin or cytochrome c6. In terms of biological role, both potential cofactor branches in PSI seem to be active; however, electron transfer seems to proceed preferentially down the path including the phylloquinone bound by PsaA. In Chlamydomonas reinhardtii (Chlamydomonas smithii), this protein is Photosystem I P700 chlorophyll a apoprotein A2 (psaB).